We begin with the raw amino-acid sequence, 1483 residues long: ABC multidrug transporter atrA (1483 aa).

Residues 1-19 (MASHKKSEDPLVVKDRQEQ) show a composition bias toward basic and acidic residues. A disordered region spans residues 1-92 (MASHKKSEDP…NDPAVDPQGP (92 aa)). Residue Asn-32 is glycosylated (N-linked (GlcNAc...) asparagine). The segment covering 71 to 82 (PTRTSTLATISE) has biased composition (polar residues). N-linked (GlcNAc...) asparagine glycosylation is found at Asn-123 and Asn-322. The 252-residue stretch at 147–398 (FRIGEMMKNR…FERQGWECPQ (252 aa)) folds into the ABC transporter 1 domain. Transmembrane regions (helical) follow at residues 512-532 (TVSTVISQIIMALIIGSVFYG), 539-559 (GFTAKGATLFFAVLLNALIAM), 595-615 (IPVKFVIAVVFNLILYFLAGL), 620-640 (GQFFLYLLVTFIVMFVMSAVF), and 654-674 (MGLAGILILALIVYTGFVLPV). N-linked (GlcNAc...) asparagine glycosylation is present at Asn-718. A helical transmembrane segment spans residues 759–779 (FGILIAFLVGFMMIYFIATEL). Residue Asn-780 is glycosylated (N-linked (GlcNAc...) asparagine). One can recognise an ABC transporter 2 domain in the interval 840–1083 (FTWRDVCYDI…LLNYFESNGA (244 aa)). 876–883 (GVSGAGKT) contacts ATP. Residues Asn-947 and Asn-1146 are each glycosylated (N-linked (GlcNAc...) asparagine). 5 consecutive transmembrane segments (helical) span residues 1179–1199 (YIASKWVLGILSGLFIGFSFF), 1215–1235 (LFMLCSIFSSLVQQVMPLFVT), 1254–1274 (AFLIANIIVEIPYQIMMGILT), 1293–1313 (LVLLLCIQFFIYASTFAHMAI), and 1320–1340 (ETASAIVVLLFAMSLTFCGVM). A glycan (N-linked (GlcNAc...) asparagine) is linked at Asn-1413. A helical transmembrane segment spans residues 1444-1464 (FGLMWVYIVFNIFLATMLYYT). The N-linked (GlcNAc...) asparagine glycan is linked to Asn-1471.

Belongs to the ABC transporter superfamily. ABCG family. PDR (TC 3.A.1.205) subfamily.

Its subcellular location is the cell membrane. It carries out the reaction (R)-miconazole(in) + ATP + H2O = (R)-miconazole(out) + ADP + phosphate + H(+). Pleiotropic ABC efflux transporter involved in the basal level of azole susceptibility. Confers resistance to miconazole and clotrimazole. The protein is ABC multidrug transporter atrA of Aspergillus oryzae (strain ATCC 42149 / RIB 40) (Yellow koji mold).